The following is a 324-amino-acid chain: MTIAVTGSIATDHLMRFPGRFSEQLLPEHLHKVSLSFLVDDLVMHRGGVAGNMAFAIGVLGGEVALVGAAGADFADYRDWLKARGVNCDHVLISETAHTARFTCTTDVDMAQIASFYPGAMSEARNIKLADVVSAIGKPELVIIGANDPEAMFLHTEECRKLGLAFAADPSQQLARLSGEEIRRLVNGAAYLFTNDYEWDLLLSKTGWSEADVMAQIDLRVTTLGPKGVDLVEPDGTTIHVGVVPETSQTDPTGVGDAFRAGFLTGRSAGLGLERSAQLGSLVAVLVLESTGTQEWQWDYEAAASRLAGAYGEHAAAEIVAVLA.

Substrate is bound by residues S8, D12, S36, G48, N52, F102, F116, and 172–173; that span reads QQ. Residues N195, 223 to 228, and G256 each bind ATP; that span reads TLGPKG. D257 serves as a coordination point for substrate. Catalysis depends on D257, which acts as the Proton acceptor.

It belongs to the carbohydrate kinase PfkB family. As to quaternary structure, homodimer. Mg(2+) is required as a cofactor.

The catalysed reaction is adenosine + ATP = AMP + ADP + H(+). It carries out the reaction adenosine + GTP = GDP + AMP + H(+). It catalyses the reaction dGTP + adenosine = dGDP + AMP + H(+). It functions in the pathway purine metabolism; AMP biosynthesis via salvage pathway; AMP from adenosine: step 1/1. In terms of biological role, catalyzes the phosphorylation of adenosine to adenosine monophosphate (AMP). Prefers dGTP and GTP to ATP as phosphate donors in vitro. This chain is Adenosine kinase (adoK), found in Mycobacterium bovis (strain ATCC BAA-935 / AF2122/97).